Here is a 315-residue protein sequence, read N- to C-terminus: Solute carrier family 25 member 32 (315 aa).

Solcar repeat units lie at residues 20–109 (HVRY…IKSY), 118–209 (LEAT…LKLK), and 222–306 (LSTV…VSHF). The next 6 helical transmembrane spans lie at 26 to 43 (LIAG…LHPL), 89 to 106 (IWGA…YNAI), 123 to 143 (YLVS…PLWV), 186 to 203 (FVPG…FMAY), 227 to 243 (YISV…AATY), and 281 to 300 (GIAP…FVVY).

This sequence belongs to the mitochondrial carrier (TC 2.A.29) family. As to expression, ubiquitous.

It is found in the mitochondrion inner membrane. It carries out the reaction FAD(in) = FAD(out). In terms of biological role, facilitates flavin adenine dinucleotide (FAD) translocation across the mitochondrial inner membrane into the mitochondrial matrix where it acts as a redox cofactor to assist flavoenzyme activities in fundamental metabolic processes including fatty acid beta-oxidation, amino acid and choline metabolism as well as mitochondrial electron transportation. In particular, provides FAD to DLD dehydrogenase of the glycine cleavage system, part of mitochondrial one-carbon metabolic pathway involved in neural tube closure in early embryogenesis. The protein is Solute carrier family 25 member 32 of Homo sapiens (Human).